Consider the following 677-residue polypeptide: mRNA export factor Gle1 (677 aa).

A compositionally biased stretch (basic and acidic residues) spans 34–48 (EDREPIWVEGSRKTP). 3 disordered regions span residues 34 to 65 (EDREPIWVEGSRKTPEPPLPEESPAPEPNNEI), 113 to 136 (KQDAMRLSRETQQRKEERQRDQLQ), and 294 to 366 (ERQR…ATST). The span at 49 to 60 (EPPLPEESPAPE) shows a compositional bias: pro residues. Coiled-coil stretches lie at residues 122 to 179 (ETQQ…QKLH) and 280 to 346 (QQQL…AANV). The segment covering 294-340 (ERQRQQQQEEERQKLEEQQKLEEQEKLRKEKEESAAKEKQQEAETAK) has biased composition (basic and acidic residues).

The protein belongs to the GLE1 family. May associate with the NPC.

It localises to the cytoplasm. It is found in the nucleus. Its subcellular location is the nuclear pore complex. Functionally, required for the export of mRNAs containing poly(A) tails from the nucleus into the cytoplasm. May be involved in the terminal step of the mRNA transport through the nuclear pore complex (NPC). This chain is mRNA export factor Gle1, found in Drosophila melanogaster (Fruit fly).